The sequence spans 296 residues: Ribosomal protein L11 methyltransferase (296 aa).

S-adenosyl-L-methionine is bound by residues Thr-146, Gly-167, Asp-189, and Asn-231.

The protein belongs to the methyltransferase superfamily. PrmA family.

It localises to the cytoplasm. The catalysed reaction is L-lysyl-[protein] + 3 S-adenosyl-L-methionine = N(6),N(6),N(6)-trimethyl-L-lysyl-[protein] + 3 S-adenosyl-L-homocysteine + 3 H(+). Methylates ribosomal protein L11. The sequence is that of Ribosomal protein L11 methyltransferase from Haemophilus influenzae (strain ATCC 51907 / DSM 11121 / KW20 / Rd).